Consider the following 525-residue polypeptide: Neuropilin and tolloid-like protein 2 (525 aa).

The signal sequence occupies residues 1 to 22; the sequence is MALEQLCAVLKVLLITVLVVEG. The Extracellular portion of the chain corresponds to 23-347; it reads IAVAQKTQDG…GLFEQITKTH (325 aa). Disulfide bonds link Cys45–Cys72, Cys100–Cys122, Cys177–Cys207, Cys234–Cys256, Cys297–Cys309, Cys304–Cys322, and Cys316–Cys331. 2 CUB domains span residues 45–159 and 177–292; these read CGIW…YSFI and CQFE…FTSF. Residues 296-332 enclose the LDL-receptor class A domain; it reads PCTSSTFFCHSNMCINNSLVCNGVQNCAYPWDENHCK. Asn311 carries N-linked (GlcNAc...) asparagine glycosylation. Residues 348 to 368 form a helical membrane-spanning segment; it reads GTIIGITSGIVLVLLIISILV. Residues 369 to 525 lie on the Cytoplasmic side of the membrane; the sequence is QVKQPRKKVM…SAQASISIDF (157 aa). Ser409 is subject to Phosphoserine.

In terms of assembly, interacts with GRIK2 and GRIK3, but neither with AMPA-nor with NMDA-sensitive glutamate receptors. Post-translationally, N-glycosylated. In terms of tissue distribution, expressed in brain tissues, including cerebellar granule cells (at protein level).

The protein resides in the cell membrane. Its function is as follows. Accessory subunit of neuronal kainate-sensitive glutamate receptors, GRIK2 and GRIK3. Increases kainate-receptor channel activity, slowing the decay kinetics of the receptors, without affecting their expression at the cell surface, and increasing the open probability of the receptor channels. Modulates the agonist sensitivity of kainate receptors. Slows the decay of kainate receptor-mediated excitatory postsynaptic currents (EPSCs), thus directly influencing synaptic transmission. The sequence is that of Neuropilin and tolloid-like protein 2 (Neto2) from Mus musculus (Mouse).